We begin with the raw amino-acid sequence, 430 residues long: MREKYLLHCPGCGRLFPDNYTLDCPLGCNALLRTVYAEHRLTLRDLPGIFRYSSWLPIEGHLRIDAGPVSYASEGLARELGLSNLTVTFSGYWPERGGRMETCSFKELEAQPTVLRLGEKGAGVLQISSAGNTGRAFCQVSALTGAPVVVVVPASAADRLWTTVPAPNVCLITVEGDYSDSIAFGREVCSLPGIVPEGGAKNVARRDGMGTVMLDAALFAGRLPDAYFQAIGSGTGGIAAWEAAERLVADGRFGSRLPTLHLSQNLPFVPMVRAWEAGRREIVPEVDMPDAEASIVRVSADVLTNRHPPWEVRGGVYDALAASGGRMYAVANDDTRSAGRLFEATEEIDLDPAAAVAVASLIRAAEEGFIGPDDHILLNVTGGGYARAAEDLDRYPVEPYLRVRAGEAFAGDVRDAVRGWLAEQEVVVRA.

Lys-106 is subject to N6-(pyridoxal phosphate)lysine. Pyridoxal 5'-phosphate is bound by residues Asn-132 and Thr-381.

Belongs to the threonine synthase family. Cysteate synthase subfamily. As to quaternary structure, homotrimer. It depends on pyridoxal 5'-phosphate as a cofactor.

The catalysed reaction is O-phospho-L-serine + sulfite + H(+) = L-cysteate + phosphate. It functions in the pathway cofactor biosynthesis; coenzyme M biosynthesis. Functionally, specifically catalyzes the beta-elimination of phosphate from L-phosphoserine and the beta-addition of sulfite to the dehydroalanine intermediate to produce L-cysteate. The protein is Cysteate synthase of Methanoculleus marisnigri (strain ATCC 35101 / DSM 1498 / JR1).